The following is a 135-amino-acid chain: Small ribosomal subunit protein uS8 (135 aa).

The protein belongs to the universal ribosomal protein uS8 family. Part of the 30S ribosomal subunit. Contacts proteins S5 and S12.

In terms of biological role, one of the primary rRNA binding proteins, it binds directly to 16S rRNA central domain where it helps coordinate assembly of the platform of the 30S subunit. The sequence is that of Small ribosomal subunit protein uS8 from Salinispora arenicola (strain CNS-205).